Reading from the N-terminus, the 760-residue chain is Leucine-rich repeat extensin-like protein 3 (760 aa).

Positions 1-20 (MKKTIQILLFFFFLINLTNA) are cleaved as a signal peptide. Asn-16 carries N-linked (GlcNAc...) asparagine glycosylation. An LRR 1 repeat occupies 21–45 (LSISSDGGVLSDNEVRHIQRRQLLE). N-linked (GlcNAc...) asparagine glycosylation is found at Asn-86 and Asn-98. LRR repeat units lie at residues 113 to 137 (IRTV…LGLL), 138 to 160 (SDLA…RFNR), 161 to 185 (LKLL…VLQL), 186 to 209 (PSLK…LFSK), 211 to 232 (LDAI…FGDS), 234 to 255 (VSVI…LVEM), 256 to 279 (KNLN…IGRL), 281 to 303 (NVTV…VGEM), and 304 to 327 (VSVE…ICQL). An N-linked (GlcNAc...) asparagine glycan is attached at Asn-281. N-linked (GlcNAc...) asparagine glycosylation is present at Asn-332. Disordered regions lie at residues 389–502 (GRSV…PPPP), 515–610 (PPVY…YSPP), and 663–748 (PPPP…PVIG). Pro residues-rich tracts occupy residues 394–415 (PRPP…PPAP) and 423–502 (LTSP…PPPP). The segment at 409–758 (SPPPPAPIFS…VSYASPPPPP (350 aa)) is contains the Ser-Pro(4) repeats. Positions 663-745 (PPPPVHYSSP…SPEYEGPLPP (83 aa)) are enriched in pro residues.

As to quaternary structure, interacts with SH3P1. Post-translationally, hydroxylated on proline residues in the S-P-P-P-P repeat. In terms of processing, O-glycosylated on hydroxyprolines. As to expression, expressed in roots, stems, leaves and flowers, mostly in vascular tissues.

Its subcellular location is the secreted. The protein resides in the cell wall. Modulates cell morphogenesis by regulating cell wall formation and assembly, and/or growth polarization. The sequence is that of Leucine-rich repeat extensin-like protein 3 (LRX3) from Arabidopsis thaliana (Mouse-ear cress).